An 860-amino-acid polypeptide reads, in one-letter code: Anoctamin-7 (860 aa).

Over 1–297 (MLRKQAGEED…YFAWLGFYTG (297 aa)) the chain is Cytoplasmic. Residues 24-50 (NGCSYGSTAQASEAGKQQVAPSRVGSS) are disordered. The chain crosses the membrane as a helical span at residues 298 to 318 (WLLPAAVVGTVVFLAGCFLVF). Residues 319–362 (SDVPTQELCHSSDTFDMCPLCSDCSFWLLSSACTLAQAGRLFDH) are Extracellular-facing. A helical transmembrane segment spans residues 363 to 383 (GGTVFFSLFMALWAVLLLEYW). Residues 384–441 (KRKNATLAYRWDCSDYEDIEERPRPQFAATAPMTALNPITGEDEPYFPEKNRVRRMLA) are Cytoplasmic-facing. The helical transmembrane segment at 442–462 (GSVVLLMMVAVVIMCLVSIIL) threads the bilayer. The Extracellular portion of the chain corresponds to 463-492 (YRAVMAIIVSKSNNAFLSAWASRIASLTGS). The helical transmembrane segment at 493 to 513 (VVNLVFILILSKVYVILAQVL) threads the bilayer. Topologically, residues 514–530 (TRWEMHRTQTAFEDAFT) are cytoplasmic. A helical transmembrane segment spans residues 531 to 551 (LKVFIFQFVNFYASPVYIAFF). Residues 552-652 (KGRFVGYPGN…FHEYLEMVLQ (101 aa)) lie on the Extracellular side of the membrane. The helical transmembrane segment at 653–673 (FGFVTIFVAACPLAPLFALLN) threads the bilayer. Over 674–701 (NWVEIRLDARKFVCEYRRPVAERAQDIG) the chain is Cytoplasmic. Residues 702–722 (IWFHILAGLTHLAVISNAFLL) traverse the membrane as a helical segment. The Extracellular portion of the chain corresponds to 723 to 779 (AFSSDFLPRVYYSWTRAPDLRGFLNFTLARAPPTFTSAHNRTCRYRAFRDDDGHYSP). N-linked (GlcNAc...) asparagine glycans are attached at residues Asn747 and Asn762. Residues 780 to 800 (TYWTLLAIRLAFVIVFEHVVF) form a helical membrane-spanning segment. Residues 801–860 (STGRFLDLLVPDIPESVEIKVKREYYLAKQALADNEALLGATGVKGEQPPSSEPSLGLPA) lie on the Cytoplasmic side of the membrane.

This sequence belongs to the anoctamin family.

It localises to the cell membrane. The protein localises to the endoplasmic reticulum. The enzyme catalyses a 1,2-diacyl-sn-glycero-3-phospho-L-serine(in) = a 1,2-diacyl-sn-glycero-3-phospho-L-serine(out). It catalyses the reaction a beta-D-galactosyl-(1&lt;-&gt;1')-N-acylsphing-4-enine(out) = a beta-D-galactosyl-(1&lt;-&gt;1')-N-acylsphing-4-enine(in). The catalysed reaction is a 1,2-diacyl-sn-glycero-3-phosphocholine(in) = a 1,2-diacyl-sn-glycero-3-phosphocholine(out). Has calcium-dependent phospholipid scramblase activity; scrambles phosphatidylserine, phosphatidylcholine and galactosylceramide. Does not exhibit calcium-activated chloride channel (CaCC) activity. May play a role in cell-cell interactions. The chain is Anoctamin-7 (Ano7) from Rattus norvegicus (Rat).